The primary structure comprises 490 residues: NAD/NADP-dependent betaine aldehyde dehydrogenase (490 aa).

The K(+) site is built by Thr26, Ile27, and Asp93. 150-153 (GAWN) contributes to the NADPH binding site. Residue Lys162 is the Charge relay system of the active site. 176–179 (KPSE) serves as a coordination point for NADPH. Residue Val180 participates in K(+) binding. NADPH is bound by residues Gly209 and 230–233 (GTST). Residue Leu246 coordinates K(+). Glu252 functions as the Proton acceptor in the catalytic mechanism. Positions 286 and 387 each coordinate NADPH. Catalysis depends on Cys286, which acts as the Nucleophile. Cys286 carries the post-translational modification Cysteine sulfenic acid (-SOH). Positions 457 and 460 each coordinate K(+). Catalysis depends on Glu464, which acts as the Charge relay system.

The protein belongs to the aldehyde dehydrogenase family. As to quaternary structure, dimer of dimers. K(+) serves as cofactor.

It catalyses the reaction betaine aldehyde + NAD(+) + H2O = glycine betaine + NADH + 2 H(+). The enzyme catalyses betaine aldehyde + NADP(+) + H2O = glycine betaine + NADPH + 2 H(+). Its pathway is amine and polyamine biosynthesis; betaine biosynthesis via choline pathway; betaine from betaine aldehyde: step 1/1. Its function is as follows. Involved in the biosynthesis of the osmoprotectant glycine betaine. Catalyzes the irreversible oxidation of betaine aldehyde to the corresponding acid. In P.aeruginosa this reaction is a compulsory step in the assimilation of carbon and nitrogen when bacteria are growing in choline or choline precursors. Can use NADP(+) with similar efficiency to NAD(+), a property that can be used by the bacterium to produce the NADPH needed to combat the oxidative stress imposed by the host defenses. In Pseudomonas aeruginosa (strain ATCC 15692 / DSM 22644 / CIP 104116 / JCM 14847 / LMG 12228 / 1C / PRS 101 / PAO1), this protein is NAD/NADP-dependent betaine aldehyde dehydrogenase.